The sequence spans 365 residues: UPF0718 protein MJ0584 (365 aa).

A run of 11 helical transmembrane segments spans residues 6–26, 32–52, 67–87, 108–128, 130–150, 174–194, 201–221, 245–265, 282–302, 308–328, and 344–364; these read MSFI…YLNV, LLMA…NFII, VAAV…PLFA, AINV…IGFL, AVFA…IFKS, ITFF…PKLF, LYDG…ILAV, IVFP…AIIP, FIAS…VPII, LGMG…LSIP, and TYLG…GIIL.

The protein belongs to the UPF0718 family.

The protein resides in the cell membrane. This chain is UPF0718 protein MJ0584, found in Methanocaldococcus jannaschii (strain ATCC 43067 / DSM 2661 / JAL-1 / JCM 10045 / NBRC 100440) (Methanococcus jannaschii).